The sequence spans 282 residues: Homeobox protein Hox-C12 (282 aa).

Disordered regions lie at residues 94 to 129 (YYRE…PLEP) and 147 to 214 (GGDG…NSRS). Residues 162–175 (SCQSLESDSSSSLL) are compositionally biased toward low complexity. Residues 214–273 (SRKKRKPYSKLQLAELEGEFLVNEFITRQRRRELSDRLNLSDQQVKIWFQNRRMKKKRLL) constitute a DNA-binding region (homeobox).

Belongs to the Abd-B homeobox family.

It localises to the nucleus. Sequence-specific transcription factor which is part of a developmental regulatory system that provides cells with specific positional identities on the anterior-posterior axis. The protein is Homeobox protein Hox-C12 (HOXC12) of Homo sapiens (Human).